A 157-amino-acid chain; its full sequence is Probable calcium-binding protein CML15 (157 aa).

4 consecutive EF-hand domains span residues 3–38 (DQIRQLKDIFDRFDMDADGSLTILELAALLRSLGLK), 39–74 (PSGDQIHVLLASMDSNGNGFVEFDELVGTILPDLNE), 78–113 (INSEQLLEIFKSFDRDGNGFISAAELAGAMAKMGQP), and 114–149 (LTYKELTEMIKEADTNGDGVISFGEFASIMAKSAVD). Positions 16, 18, 20, 22, 27, 52, 54, 56, 63, 91, 93, 95, 102, 127, 129, 131, and 138 each coordinate Ca(2+).

In terms of biological role, potential calcium sensor. This chain is Probable calcium-binding protein CML15 (CML15), found in Arabidopsis thaliana (Mouse-ear cress).